A 478-amino-acid polypeptide reads, in one-letter code: NADH-quinone oxidoreductase subunit N (478 aa).

Helical transmembrane passes span 7-27 (SFIPAIPEIVLLTLTSLLLIA), 46-66 (ILLVVGYLVLTSFSTSQVLTF), 74-94 (AFGDILKLVIVVVSMGIFLFS), 109-129 (FTLGLFGVLGMFVMVSAYNLI), 163-183 (FVLGALATGMLLYGFSMIYGA), 204-224 (VVLSFGVVFIVIGLAFKLGAV), 237-257 (APTAVTLYIGTAPKIAAFAML), 273-293 (QSLIVMISVLSLIVGAVITLV), 300-320 (LLAYSGIGHIGFILLGIIAAN), 328-348 (MFYTIVYSITALAGFGMIVAL), 371-391 (LALMMLFIMFSMAGIPPFVGF), 405-425 (GFTWLAVLAVVMAVISAFYYL), and 451-471 (WAVSFVSIALLLLGLMPSSLI).

This sequence belongs to the complex I subunit 2 family. As to quaternary structure, NDH-1 is composed of 14 different subunits. Subunits NuoA, H, J, K, L, M, N constitute the membrane sector of the complex.

The protein resides in the cell inner membrane. The catalysed reaction is a quinone + NADH + 5 H(+)(in) = a quinol + NAD(+) + 4 H(+)(out). In terms of biological role, NDH-1 shuttles electrons from NADH, via FMN and iron-sulfur (Fe-S) centers, to quinones in the respiratory chain. The immediate electron acceptor for the enzyme in this species is believed to be ubiquinone. Couples the redox reaction to proton translocation (for every two electrons transferred, four hydrogen ions are translocated across the cytoplasmic membrane), and thus conserves the redox energy in a proton gradient. This is NADH-quinone oxidoreductase subunit N from Hydrogenovibrio crunogenus (strain DSM 25203 / XCL-2) (Thiomicrospira crunogena).